A 559-amino-acid polypeptide reads, in one-letter code: Membrane protein insertase YidC (559 aa).

A helical transmembrane segment spans residues 7 to 24 (ILWVIFSMSLVLLYDNWQ). 2 stretches are compositionally biased toward low complexity: residues 45–55 (APAASGAAAQG) and 63–82 (QPAT…QAAA). Residues 45–82 (APAASGAAAQGDVPKANVQPATGTSAAPAAGAAPQAAA) are disordered. A run of 5 helical transmembrane segments spans residues 338 to 358 (LELV…FWLL), 364 to 384 (FLGN…LVFF), 434 to 454 (LGGC…YWVL), 472 to 492 (LSVP…MFVQ), and 507 to 527 (VMMI…AGLV).

It belongs to the OXA1/ALB3/YidC family. Type 1 subfamily. As to quaternary structure, interacts with the Sec translocase complex via SecD. Specifically interacts with transmembrane segments of nascent integral membrane proteins during membrane integration.

The protein localises to the cell inner membrane. Required for the insertion and/or proper folding and/or complex formation of integral membrane proteins into the membrane. Involved in integration of membrane proteins that insert both dependently and independently of the Sec translocase complex, as well as at least some lipoproteins. Aids folding of multispanning membrane proteins. This is Membrane protein insertase YidC from Cupriavidus taiwanensis (strain DSM 17343 / BCRC 17206 / CCUG 44338 / CIP 107171 / LMG 19424 / R1) (Ralstonia taiwanensis (strain LMG 19424)).